A 128-amino-acid polypeptide reads, in one-letter code: Sirohydrochlorin cobaltochelatase (128 aa).

Residue His9 is the Proton acceptor of the active site. His9 is a binding site for Co(2+). Substrate is bound by residues Lys43 and 68-73 (FATGTH). Co(2+) is bound at residue His73.

Belongs to the CbiX family. CbiXS subfamily. Homotetramer; dimer of dimers.

It carries out the reaction Co-sirohydrochlorin + 2 H(+) = sirohydrochlorin + Co(2+). It functions in the pathway cofactor biosynthesis; adenosylcobalamin biosynthesis; cob(II)yrinate a,c-diamide from sirohydrochlorin (anaerobic route): step 1/10. Catalyzes the insertion of Co(2+) into sirohydrochlorin as part of the anaerobic pathway to cobalamin biosynthesis. The sequence is that of Sirohydrochlorin cobaltochelatase from Saccharolobus solfataricus (strain ATCC 35092 / DSM 1617 / JCM 11322 / P2) (Sulfolobus solfataricus).